The chain runs to 42 residues: Pelovaterin (42 aa).

3 cysteine pairs are disulfide-bonded: C8–C38, C16–C32, and C24–C39.

Its subcellular location is the secreted. The protein resides in the extracellular space. The protein localises to the extracellular matrix. Functionally, induces the nucleation and stabilization of vaterite, one of the crystalline polymorphs of calcium carbonate. Exhibits strong antimicrobial activity against Pseudomonas aeruginosa and Proteus vulgaris. This Pelodiscus sinensis (Chinese softshell turtle) protein is Pelovaterin.